A 183-amino-acid polypeptide reads, in one-letter code: Photosystem I assembly protein Ycf3 (183 aa).

TPR repeat units follow at residues alanine 35–serine 68, serine 72–leucine 105, and glycine 120–asparagine 153.

Belongs to the Ycf3 family.

Its subcellular location is the plastid. The protein localises to the chloroplast thylakoid membrane. In terms of biological role, essential for the assembly of the photosystem I (PSI) complex. May act as a chaperone-like factor to guide the assembly of the PSI subunits. The chain is Photosystem I assembly protein Ycf3 from Adiantum capillus-veneris (Maidenhair fern).